The primary structure comprises 369 residues: 3',5'-cyclic-nucleotide phosphodiesterase 1 (369 aa).

The protein belongs to the cyclic nucleotide phosphodiesterase class-II family.

The enzyme catalyses a nucleoside 3',5'-cyclic phosphate + H2O = a nucleoside 5'-phosphate + H(+). Controls the level of cAMP in yeast cells, together with the high-affinity cAMP phosphodiesterase (PDE2). The polypeptide is 3',5'-cyclic-nucleotide phosphodiesterase 1 (PDE1) (Saccharomyces cerevisiae (strain ATCC 204508 / S288c) (Baker's yeast)).